We begin with the raw amino-acid sequence, 431 residues long: Enolase (431 aa).

Glutamine 166 serves as a coordination point for (2R)-2-phosphoglycerate. The active-site Proton donor is the glutamate 208. The Mg(2+) site is built by aspartate 245, glutamate 289, and aspartate 316. (2R)-2-phosphoglycerate-binding residues include lysine 341, arginine 370, serine 371, and lysine 392. Catalysis depends on lysine 341, which acts as the Proton acceptor.

This sequence belongs to the enolase family. Requires Mg(2+) as cofactor.

Its subcellular location is the cytoplasm. The protein localises to the secreted. The protein resides in the cell surface. The enzyme catalyses (2R)-2-phosphoglycerate = phosphoenolpyruvate + H2O. The protein operates within carbohydrate degradation; glycolysis; pyruvate from D-glyceraldehyde 3-phosphate: step 4/5. In terms of biological role, catalyzes the reversible conversion of 2-phosphoglycerate (2-PG) into phosphoenolpyruvate (PEP). It is essential for the degradation of carbohydrates via glycolysis. This Ruminiclostridium cellulolyticum (strain ATCC 35319 / DSM 5812 / JCM 6584 / H10) (Clostridium cellulolyticum) protein is Enolase.